The following is a 131-amino-acid chain: Profilin (131 aa).

The protein belongs to the profilin family. In terms of assembly, occurs in many kinds of cells as a complex with monomeric actin in a 1:1 ratio.

It localises to the cytoplasm. The protein localises to the cytoskeleton. In terms of biological role, binds to actin and affects the structure of the cytoskeleton. At high concentrations, profilin prevents the polymerization of actin, whereas it enhances it at low concentrations. By binding to PIP2, it inhibits the formation of IP3 and DG. This is Profilin from Cucumis melo (Muskmelon).